A 292-amino-acid chain; its full sequence is MTQSAGLRFRQALANSKPLQIVGTTNAYFALMAEQTGFQALYLSGAGVANASYGLPDLGMTSMNDVLIDAGRITSATQLPLLVDIDTGWGGAFNIARTIKEFEKIGVAAVHMEDQVSQKRCGHRPNKAVVSTEEMVDRIKAAVDARTDPNFVIMARTDAVAVEGLEAGIERAKAYIAAGADMIFAEALTELDQYRHFKAQVKAPILANMTEFGQTQLFNKEELAQAGADMVLYPLGTFRAANQAALKVMQALMNDGHQRNVLDTMQTRADLYKYLGYHAFEDKLDQLFSQDK.

S44 to A46 is a binding site for substrate. 2 residues coordinate Mg(2+): D84 and D86. Residues C121 to G122, R156, E186, N208 to T210, R239, and R268 contribute to the substrate site.

This sequence belongs to the isocitrate lyase/PEP mutase superfamily. Methylisocitrate lyase family. In terms of assembly, homotetramer; dimer of dimers. Mg(2+) is required as a cofactor.

The catalysed reaction is (2S,3R)-3-hydroxybutane-1,2,3-tricarboxylate = pyruvate + succinate. Its pathway is organic acid metabolism; propanoate degradation. Involved in the catabolism of short chain fatty acids (SCFA) via the 2-methylcitrate cycle I (propionate degradation route). Catalyzes the thermodynamically favored C-C bond cleavage of (2R,3S)-2-methylisocitrate to yield pyruvate and succinate via an alpha-carboxy-carbanion intermediate. The protein is 2-methylisocitrate lyase of Shewanella oneidensis (strain ATCC 700550 / JCM 31522 / CIP 106686 / LMG 19005 / NCIMB 14063 / MR-1).